We begin with the raw amino-acid sequence, 952 residues long: Lysosomal alpha-glucosidase (952 aa).

The signal sequence occupies residues 1–27; the sequence is MGVRHPPCSHRLLAVCALVSLATAALL. The propeptide occupies 28-69; the sequence is GHILLHDFLLVPRELSGSSPVLEETHPAHQQGASRPGPRDAQ. Residues 47–82 form a disordered region; it reads PVLEETHPAHQQGASRPGPRDAQAHPGRPRAVPTQC. Residues 80–131 enclose the P-type domain; it reads TQCDVPPNSRFDCAPDKAITQEQCEARGCCYIPAKQGLQGAQMGQPWCFFPP. 3 disulfides stabilise this stretch: Cys82/Cys109, Cys92/Cys108, and Cys103/Cys127. 3 N-linked (GlcNAc...) asparagine glycosylation sites follow: Asn140, Asn233, and Asn390. Asp404 lines the substrate pocket. A glycan (N-linked (GlcNAc...) asparagine) is linked at Asn470. Catalysis depends on Asp518, which acts as the Nucleophile. The active site involves Glu521. Residues Cys533 and Cys558 are joined by a disulfide bond. Substrate contacts are provided by Arg600 and Asp616. Cys647 and Cys658 form a disulfide bridge. N-linked (GlcNAc...) asparagine glycosylation is present at Asn652. His674 serves as a coordination point for substrate. Residues Asn882 and Asn925 are each glycosylated (N-linked (GlcNAc...) asparagine).

This sequence belongs to the glycosyl hydrolase 31 family. Post-translationally, the different forms of acid glucosidase are obtained by proteolytic processing. In terms of processing, phosphorylation of mannose residues ensures efficient transport of the enzyme to the lysosomes via the mannose 6-phosphate receptor.

The protein localises to the lysosome. The protein resides in the lysosome membrane. The enzyme catalyses Hydrolysis of terminal, non-reducing (1-&gt;4)-linked alpha-D-glucose residues with release of alpha-D-glucose.. Functionally, essential for the degradation of glycogen in lysosomes. Has highest activity on alpha-1,4-linked glycosidic linkages, but can also hydrolyze alpha-1,6-linked glucans. The polypeptide is Lysosomal alpha-glucosidase (GAA) (Homo sapiens (Human)).